The primary structure comprises 490 residues: Bifunctional dihydrocamalexate synthase/camalexin synthase (490 aa).

The chain crosses the membrane as a helical span at residues 1–21; sequence MSVFLCFLVLLPLILIFLNVL.

This sequence belongs to the cytochrome P450 family.

The protein resides in the membrane. It catalyses the reaction 2-(L-cystein-S-yl)-2-(1H-indol-3-yl)-acetonitrile + 2 reduced [NADPH--hemoprotein reductase] + 2 O2 = camalexin + hydrogen cyanide + 2 oxidized [NADPH--hemoprotein reductase] + CO2 + 4 H2O + 2 H(+). The enzyme catalyses 2-(L-cystein-S-yl)-2-(1H-indol-3-yl)-acetonitrile + reduced [NADPH--hemoprotein reductase] + O2 = (R)-dihydrocamalexate + hydrogen cyanide + oxidized [NADPH--hemoprotein reductase] + 2 H2O + 2 H(+). The catalysed reaction is (R)-dihydrocamalexate + reduced [NADPH--hemoprotein reductase] + O2 = camalexin + oxidized [NADPH--hemoprotein reductase] + CO2 + 2 H2O. Its function is as follows. Multifunctional enzyme involved in the biosynthesis of the indole-derived phytoalexin camalexin. Catalyzes two reactions, the formation of dihydrocamalexate from indole-3-acetonitrile-cysteine conjugate and the oxidative decarboxylation of dihydrocamalexate which is the final step in camalexin biosynthesis. Required for the resistance to the fungal pathogens A.brassicicola, B.cinerea, B.elliptica, B.tulipae, L.maculans and Colletotrichum higginsianum. Seems not to be required for resistance to P.syringae, P.porri, and not involved in age-related resistance. This chain is Bifunctional dihydrocamalexate synthase/camalexin synthase (CYP71B15), found in Arabidopsis thaliana (Mouse-ear cress).